The following is a 1072-amino-acid chain: Carbamoyl phosphate synthase large chain (1072 aa).

The segment at 1–401 (MPKRLDINTI…SLLKAVRSLE (401 aa)) is carboxyphosphate synthetic domain. Positions 129, 169, 175, 176, 208, 210, 215, 241, 242, 243, 284, and 298 each coordinate ATP. Positions 133 to 327 (RTLMQDLNEP…IAKLAAKIAV (195 aa)) constitute an ATP-grasp 1 domain. Mg(2+)-binding residues include Q284, E298, and N300. Residues Q284, E298, and N300 each contribute to the Mn(2+) site. The oligomerization domain stretch occupies residues 402–546 (LGIYHLELDH…YSTYADENES (145 aa)). The segment at 547–929 (IVTDRKSVVV…ALYKGLVASG (383 aa)) is carbamoyl phosphate synthetic domain. Residues 671-861 (EAALTKLGIP…MANVATKVIL (191 aa)) form the ATP-grasp 2 domain. ATP-binding residues include R707, R746, E752, G777, V778, H779, S780, Q820, and E832. Mg(2+)-binding residues include Q820, E832, and N834. 3 residues coordinate Mn(2+): Q820, E832, and N834. One can recognise an MGS-like domain in the interval 930–1072 (INIPTHGSVI…QTKRHEVVHA (143 aa)). An allosteric domain region spans residues 930-1072 (INIPTHGSVI…QTKRHEVVHA (143 aa)).

This sequence belongs to the CarB family. As to quaternary structure, composed of two chains; the small (or glutamine) chain promotes the hydrolysis of glutamine to ammonia, which is used by the large (or ammonia) chain to synthesize carbamoyl phosphate. Tetramer of heterodimers (alpha,beta)4. The cofactor is Mg(2+). It depends on Mn(2+) as a cofactor.

It catalyses the reaction hydrogencarbonate + L-glutamine + 2 ATP + H2O = carbamoyl phosphate + L-glutamate + 2 ADP + phosphate + 2 H(+). The catalysed reaction is hydrogencarbonate + NH4(+) + 2 ATP = carbamoyl phosphate + 2 ADP + phosphate + 2 H(+). The protein operates within amino-acid biosynthesis; L-arginine biosynthesis; carbamoyl phosphate from bicarbonate: step 1/1. It participates in pyrimidine metabolism; UMP biosynthesis via de novo pathway; (S)-dihydroorotate from bicarbonate: step 1/3. Its function is as follows. Large subunit of the glutamine-dependent carbamoyl phosphate synthetase (CPSase). CPSase catalyzes the formation of carbamoyl phosphate from the ammonia moiety of glutamine, carbonate, and phosphate donated by ATP, constituting the first step of 2 biosynthetic pathways, one leading to arginine and/or urea and the other to pyrimidine nucleotides. The large subunit (synthetase) binds the substrates ammonia (free or transferred from glutamine from the small subunit), hydrogencarbonate and ATP and carries out an ATP-coupled ligase reaction, activating hydrogencarbonate by forming carboxy phosphate which reacts with ammonia to form carbamoyl phosphate. The protein is Carbamoyl phosphate synthase large chain of Bacillus cereus (strain B4264).